The primary structure comprises 176 residues: Ribosome maturation factor RimM (176 aa).

One can recognise a PRC barrel domain in the interval 95–169; the sequence is EDEVYLFELE…TARIAPPPGL (75 aa).

The protein belongs to the RimM family. In terms of assembly, binds ribosomal protein uS19.

It localises to the cytoplasm. Its function is as follows. An accessory protein needed during the final step in the assembly of 30S ribosomal subunit, possibly for assembly of the head region. Essential for efficient processing of 16S rRNA. May be needed both before and after RbfA during the maturation of 16S rRNA. It has affinity for free ribosomal 30S subunits but not for 70S ribosomes. This is Ribosome maturation factor RimM from Nitratidesulfovibrio vulgaris (strain ATCC 29579 / DSM 644 / CCUG 34227 / NCIMB 8303 / VKM B-1760 / Hildenborough) (Desulfovibrio vulgaris).